Consider the following 1121-residue polypeptide: Anillin (1121 aa).

Position 1 is an N-acetylmethionine (Met-1). A compositionally biased stretch (basic and acidic residues) spans 1–25 (MDPFTEKLLERTRARRENLQRKMAE). Positions 1–45 (MDPFTEKLLERTRARRENLQRKMAERPTAVARSAPHAKRGREPLS) are required for ubiquitination. Disordered stretches follow at residues 1 to 113 (MDPF…AAIS), 125 to 196 (ADRG…PVGR), and 212 to 402 (DDVS…TKAI). The segment at 1 to 154 (MDPFTEKLLE…MQRLAEQRRH (154 aa)) is interaction with CD2AP. Positions 1–228 (MDPFTEKLLE…AKQNSVQEQP (228 aa)) are nuclear localization. Ser-73 and Ser-96 each carry phosphoserine. The span at 96–109 (SPMPAPRQAKPPAP) shows a compositional bias: pro residues. Positions 130–143 (NSGSEASATSSVKT) are enriched in polar residues. Residues 147–157 (RLAEQRRHWDS) are compositionally biased toward basic and acidic residues. Phosphoserine is present on Ser-180. A Phosphothreonine modification is found at Thr-192. Residues 216–228 (HSSAKQNSVQEQP) are compositionally biased toward polar residues. Phosphoserine is present on residues Ser-223, Ser-250, and Ser-259. Residues 229–671 (GTACLSKSSS…RDLLYSIDAY (443 aa)) form an interaction with F-actin region. The span at 234–250 (SKSSSASGASASINSSS) shows a compositional bias: low complexity. The segment covering 282 to 298 (SASVSSSVKASSPVTAA) has biased composition (low complexity). Residues 303-314 (ENREAQNPELLH) are compositionally biased toward basic and acidic residues. Residue Thr-316 is modified to Phosphothreonine. 2 positions are modified to phosphoserine: Ser-318 and Ser-334. Thr-359 carries the post-translational modification Phosphothreonine. N6-acetyllysine is present on Lys-366. Residues 368–384 (FLERFGERCQEHSKESP) show a composition bias toward basic and acidic residues. Polar residues predominate over residues 391–401 (KTPNITPNTKA). Phosphothreonine is present on residues Thr-392 and Thr-396. 2 positions are modified to phosphoserine: Ser-414 and Ser-444. The disordered stretch occupies residues 490–511 (NEPAVKLSSTEPAGSTESEMTK). The span at 496–511 (LSSTEPAGSTESEMTK) shows a compositional bias: polar residues. Phosphoserine is present on residues Ser-513, Ser-548, and Ser-556. Positions 564-599 (FSDVLEEGELDVEKSQEEMDQVGAENSEEQEDALNI) form a coiled coil. The span at 623–635 (SPPSELRDSNLSA) shows a compositional bias: polar residues. Residues 623-656 (SPPSELRDSNLSAASPKPGKFQRTRVPRAESADS) are disordered. 4 positions are modified to phosphoserine: Ser-637, Ser-653, Ser-656, and Ser-659. Tyr-666 is modified (phosphotyrosine). Phosphoserine is present on residues Ser-673, Ser-683, Ser-787, and Ser-924. The tract at residues 725 to 1121 (QQTVIYQASQ…DACYKPVGKP (397 aa)) is localization to the cleavage furrow. Positions 980 to 1104 (AVEEKGFLTI…WMQKLNQVIV (125 aa)) constitute a PH domain.

As to quaternary structure, interacts with F-actin. Interacts with CD2AP. May interact with RHOA. Interacts with FZR1/CDH1 during mitotic exit. Post-translationally, phosphorylated during mitosis. Ubiquitinated, and this requires FZR1/CDH1.

Its subcellular location is the nucleus. The protein resides in the cytoplasm. It localises to the cytoskeleton. The protein localises to the cell cortex. It is found in the cell projection. Its subcellular location is the bleb. Functionally, required for cytokinesis. Essential for the structural integrity of the cleavage furrow and for completion of cleavage furrow ingression. Plays a role in bleb assembly during metaphase and anaphase of mitosis. May play a significant role in podocyte cell migration. In Mus musculus (Mouse), this protein is Anillin (Anln).